A 152-amino-acid chain; its full sequence is Large ribosomal subunit protein eL32 (152 aa).

It belongs to the eukaryotic ribosomal protein eL32 family.

The polypeptide is Large ribosomal subunit protein eL32 (rpl32e) (Pyrobaculum aerophilum (strain ATCC 51768 / DSM 7523 / JCM 9630 / CIP 104966 / NBRC 100827 / IM2)).